The sequence spans 358 residues: Peptide chain release factor 1 (358 aa).

Gln-233 carries the post-translational modification N5-methylglutamine.

The protein belongs to the prokaryotic/mitochondrial release factor family. In terms of processing, methylated by PrmC. Methylation increases the termination efficiency of RF1.

The protein localises to the cytoplasm. Peptide chain release factor 1 directs the termination of translation in response to the peptide chain termination codons UAG and UAA. The polypeptide is Peptide chain release factor 1 (Clostridium botulinum (strain ATCC 19397 / Type A)).